A 257-amino-acid polypeptide reads, in one-letter code: Methylthioribulose-1-phosphate dehydratase (257 aa).

C107 is a binding site for substrate. The Zn(2+) site is built by H125 and H127. E148 (proton donor/acceptor) is an active-site residue. Zn(2+) is bound at residue H210.

The protein belongs to the aldolase class II family. MtnB subfamily. Zn(2+) serves as cofactor.

The protein localises to the cytoplasm. It carries out the reaction 5-(methylsulfanyl)-D-ribulose 1-phosphate = 5-methylsulfanyl-2,3-dioxopentyl phosphate + H2O. The protein operates within amino-acid biosynthesis; L-methionine biosynthesis via salvage pathway; L-methionine from S-methyl-5-thio-alpha-D-ribose 1-phosphate: step 2/6. Catalyzes the dehydration of methylthioribulose-1-phosphate (MTRu-1-P) into 2,3-diketo-5-methylthiopentyl-1-phosphate (DK-MTP-1-P). The polypeptide is Methylthioribulose-1-phosphate dehydratase (Lachancea thermotolerans (strain ATCC 56472 / CBS 6340 / NRRL Y-8284) (Yeast)).